The sequence spans 73 residues: Excelsatoxin A (73 aa).

Residues methionine 1–alanine 20 form the signal peptide. The propeptide occupies aspartate 21–aspartate 37. 3 disulfide bridges follow: cysteine 41–cysteine 58, cysteine 46–cysteine 60, and cysteine 54–cysteine 69.

This sequence belongs to the gympietide family. Expressed in trichomes, that are stiff epidermal hairs located on the surface of petioles and leaves. Not expressed in other aerial parts.

Its subcellular location is the secreted. Functionally, neurotoxin certainly responsible for the defensive, persistent, and painful stings of the giant stinging tree. Inhibits inactivation of Nav1.7/SCN9A sodium channel in sensory neurons by directly interacting with TMEM233, a newly described Nav-interacting protein. Has virtually no effect on Nav1.7/SCN9A function in heterologous expression systems and in neurons that do not express TMEM233. Also weakly but significantly affects Nav1.8/SCN10A. Coexpression of TMEM233 with Nav also confers ExTxA sensitivity to Nav1.1-Nav1.6. On the Nav1.7/SCN9A channel, causes a significant hyperpolarizing shift in the voltage dependence of activation. Its effects on Nav currents are irreversible, with no apparent reduction in activity even after repeated wash steps over 30 minutes. Does not show activity on Nav1.9/SCN11A. Does not show insecticidal activities. In vivo, induces nocifensive behavior in mice (licking or biting and shaking or lifting of the affected paw) lasting for approximately 1 hour. The sequence is that of Excelsatoxin A from Dendrocnide excelsa (Giant stinging tree).